We begin with the raw amino-acid sequence, 229 residues long: Potassium/proton antiporter CemA (229 aa).

A run of 2 helical transmembrane segments spans residues 114 to 134 (IIYF…LIIL) and 189 to 209 (IISG…KYWI).

It belongs to the CemA family.

Its subcellular location is the plastid. It localises to the chloroplast inner membrane. The catalysed reaction is K(+)(in) + H(+)(out) = K(+)(out) + H(+)(in). Functionally, contributes to K(+)/H(+) antiport activity by supporting proton efflux to control proton extrusion and homeostasis in chloroplasts in a light-dependent manner to modulate photosynthesis. Prevents excessive induction of non-photochemical quenching (NPQ) under continuous-light conditions. Indirectly promotes efficient inorganic carbon uptake into chloroplasts. The polypeptide is Potassium/proton antiporter CemA (Lotus japonicus (Lotus corniculatus var. japonicus)).